Consider the following 367-residue polypeptide: Chorismate synthase (367 aa).

Residue Arg48 participates in NADP(+) binding. FMN-binding positions include 125–127 (RSS), 241–242 (NA), Gly285, 300–304 (KPTSS), and Arg326.

This sequence belongs to the chorismate synthase family. Homotetramer. FMNH2 serves as cofactor.

The catalysed reaction is 5-O-(1-carboxyvinyl)-3-phosphoshikimate = chorismate + phosphate. Its pathway is metabolic intermediate biosynthesis; chorismate biosynthesis; chorismate from D-erythrose 4-phosphate and phosphoenolpyruvate: step 7/7. Its function is as follows. Catalyzes the anti-1,4-elimination of the C-3 phosphate and the C-6 proR hydrogen from 5-enolpyruvylshikimate-3-phosphate (EPSP) to yield chorismate, which is the branch point compound that serves as the starting substrate for the three terminal pathways of aromatic amino acid biosynthesis. This reaction introduces a second double bond into the aromatic ring system. This Dinoroseobacter shibae (strain DSM 16493 / NCIMB 14021 / DFL 12) protein is Chorismate synthase.